The following is a 71-amino-acid chain: Exodeoxyribonuclease 7 small subunit (71 aa).

This sequence belongs to the XseB family. In terms of assembly, heterooligomer composed of large and small subunits.

Its subcellular location is the cytoplasm. It carries out the reaction Exonucleolytic cleavage in either 5'- to 3'- or 3'- to 5'-direction to yield nucleoside 5'-phosphates.. Functionally, bidirectionally degrades single-stranded DNA into large acid-insoluble oligonucleotides, which are then degraded further into small acid-soluble oligonucleotides. The polypeptide is Exodeoxyribonuclease 7 small subunit (Streptococcus equi subsp. zooepidemicus (strain H70)).